Consider the following 189-residue polypeptide: Elongation factor P (189 aa).

The protein belongs to the elongation factor P family.

The protein resides in the cytoplasm. It participates in protein biosynthesis; polypeptide chain elongation. In terms of biological role, involved in peptide bond synthesis. Stimulates efficient translation and peptide-bond synthesis on native or reconstituted 70S ribosomes in vitro. Probably functions indirectly by altering the affinity of the ribosome for aminoacyl-tRNA, thus increasing their reactivity as acceptors for peptidyl transferase. In Campylobacter fetus subsp. fetus (strain 82-40), this protein is Elongation factor P.